The sequence spans 574 residues: Protein OBERON 2 (574 aa).

Polar residues-rich tracts occupy residues 1–10 (MGTSSGSNHP) and 65–76 (SMSQKTEPDSME). The segment at 1-76 (MGTSSGSNHP…SQKTEPDSME (76 aa)) is disordered. The PHD-type zinc-finger motif lies at 226–291 (LCMCTICNKF…VFKCRACNRT (66 aa)). Residues 416–524 (KKARMALETC…LFEKIKLQEN (109 aa)) adopt a coiled-coil conformation.

As to quaternary structure, self-interacts. Interacts with OBE1, OBE3 and OBE4. Binds to VPg of pea seed borne mosaic virus (PSbMV), turnip mosaic virus (TuMV) and lettuce mosaic virus (LMV), but not with VPg of tobacco etch virus (TEV), cowpea mosaic virus (CPMV), tomato black ring virus (TBRV) and grapevine fan leaf virus (GFLV). In terms of tissue distribution, expressed in roots, seedlings, stems, leaves, flowers and siliques, especially in the vasculature.

Its subcellular location is the nucleus. Functionally, probable transcription factor that acts together with OBE1 for the maintenance and/or establishment of both the shoot and root meristems, probably by controlling the expression of the meristem genes such as WUS, PLT1 and PLT2 and of genes required for auxin responses. Promotes cell meristematic activity via the WUSCHEL-CLAVATA pathway. Involved in the development of the basal pole and in auxin-mediated root and vascular development in the embryo. Confers sensitivity to turnip mosaic virus (TuMV) probably by promoting viral movement and multiplication via interaction with TuMV VPg. This Arabidopsis thaliana (Mouse-ear cress) protein is Protein OBERON 2.